A 475-amino-acid polypeptide reads, in one-letter code: Ribulose bisphosphate carboxylase large chain (475 aa).

A propeptide spanning residues 1 to 2 is cleaved from the precursor; that stretch reads MS. At proline 3 the chain carries N-acetylproline. An N6,N6,N6-trimethyllysine modification is found at lysine 14. Substrate-binding residues include asparagine 123 and threonine 173. The Proton acceptor role is filled by lysine 175. Residue lysine 177 participates in substrate binding. Mg(2+) contacts are provided by lysine 201, aspartate 203, and glutamate 204. At lysine 201 the chain carries N6-carboxylysine. The active-site Proton acceptor is histidine 294. Positions 295, 327, and 379 each coordinate substrate.

Belongs to the RuBisCO large chain family. Type I subfamily. As to quaternary structure, heterohexadecamer of 8 large chains and 8 small chains; disulfide-linked. The disulfide link is formed within the large subunit homodimers. The cofactor is Mg(2+). In terms of processing, the disulfide bond which can form in the large chain dimeric partners within the hexadecamer appears to be associated with oxidative stress and protein turnover.

The protein resides in the plastid. It is found in the chloroplast. It carries out the reaction 2 (2R)-3-phosphoglycerate + 2 H(+) = D-ribulose 1,5-bisphosphate + CO2 + H2O. The enzyme catalyses D-ribulose 1,5-bisphosphate + O2 = 2-phosphoglycolate + (2R)-3-phosphoglycerate + 2 H(+). Its function is as follows. RuBisCO catalyzes two reactions: the carboxylation of D-ribulose 1,5-bisphosphate, the primary event in carbon dioxide fixation, as well as the oxidative fragmentation of the pentose substrate in the photorespiration process. Both reactions occur simultaneously and in competition at the same active site. This Pinus edulis (Pinyon pine) protein is Ribulose bisphosphate carboxylase large chain.